A 244-amino-acid polypeptide reads, in one-letter code: LOB domain-containing protein 17 (244 aa).

In terms of domain architecture, LOB spans 6–108 (SPCGACKFLR…TQLEILKQQA (103 aa)).

It belongs to the LOB domain-containing protein family. As to expression, expressed in roots, stems, leaves and flowers.

This chain is LOB domain-containing protein 17 (LBD17), found in Arabidopsis thaliana (Mouse-ear cress).